Here is a 385-residue protein sequence, read N- to C-terminus: Sensor histidine kinase Hik2 (385 aa).

The GAF domain maps to 11–131; the sequence is ALCRTQLELV…QQVAQTLAIA (121 aa). Residue Cys-13 participates in [3Fe-4S] cluster binding. The interval 142–270 is DHp domain, may sense NaCl; it reads SHSPAQPLDQ…PQLPPIWLEE (129 aa). Positions 158–381 constitute a Histidine kinase domain; sequence DLLHQLRNPV…AFTLAIPWQM (224 aa). His-161 is modified (phosphohistidine; by autocatalysis).

Belongs to the chloroplast sensor kinase protein family. As to quaternary structure, hexamers; upon treatment with 0.5 M NaCl only tetramers are seen. The tetramers are probably inactive. Requires [3Fe-4S] cluster as cofactor. In terms of processing, autophosphorylates, possibly on His-161.

The catalysed reaction is ATP + protein L-histidine = ADP + protein N-phospho-L-histidine.. Member of 2 two-component regulatory system(s) Hik2/Rre1 and Hik2/RppA. Transduces PQ (plastoquinone) redox signals to photosystem gene expression machinery during the adjustment of photosystem stoichiometry. Reduced PQ suppresses its autophosphorylation activity (i.e. kinase activity is higher under oxidizing conditions). As part of a two-component regulatory system with Rre1, controls expression of sigB and several other genes in response to hyperosmotic stress. May transfer phosphate to RppA in a possible Hik2/RppA two-component system. The protein is Sensor histidine kinase Hik2 of Thermosynechococcus vestitus (strain NIES-2133 / IAM M-273 / BP-1).